A 142-amino-acid chain; its full sequence is Large ribosomal subunit protein uL13 (142 aa).

It belongs to the universal ribosomal protein uL13 family. As to quaternary structure, part of the 50S ribosomal subunit.

This protein is one of the early assembly proteins of the 50S ribosomal subunit, although it is not seen to bind rRNA by itself. It is important during the early stages of 50S assembly. The protein is Large ribosomal subunit protein uL13 of Psychromonas ingrahamii (strain DSM 17664 / CCUG 51855 / 37).